The following is a 331-amino-acid chain: Glutaminase (331 aa).

7 residues coordinate substrate: Ser77, Asn129, Glu173, Asn180, Tyr204, Tyr256, and Val274.

The protein belongs to the glutaminase family. In terms of assembly, homotetramer.

The catalysed reaction is L-glutamine + H2O = L-glutamate + NH4(+). The chain is Glutaminase from Oceanobacillus iheyensis (strain DSM 14371 / CIP 107618 / JCM 11309 / KCTC 3954 / HTE831).